The chain runs to 258 residues: PHD finger protein ALFIN-LIKE 5 (258 aa).

Positions 143–205 are disordered; the sequence is AKKQTKEKAP…EEEERDNTLC (63 aa). A compositionally biased stretch (polar residues) spans 152-165; sequence PNSTNKPNKPSSKM. Positions 184-200 are enriched in acidic residues; the sequence is DDDESGDEYADEEEEER. The PHD-type zinc-finger motif lies at 202 to 254; it reads NTLCGSCGTNDGKDEFWICCDSCERWYHGKCVKITPARAEHIKHYKCPDCGNK.

The protein belongs to the Alfin family.

It localises to the nucleus. Functionally, histone-binding component that specifically recognizes H3 tails trimethylated on 'Lys-4' (H3K4me3), which mark transcription start sites of virtually all active genes. The polypeptide is PHD finger protein ALFIN-LIKE 5 (Oryza sativa subsp. indica (Rice)).